The chain runs to 114 residues: Replication initiation control protein YabA (114 aa).

Residues His-79, Cys-81, Cys-95, and Cys-98 each coordinate Zn(2+).

It belongs to the YabA family. As to quaternary structure, homotetramer. Interacts with both DnaA and DnaN, acting as a bridge between these two proteins. Zn(2+) is required as a cofactor.

It is found in the cytoplasm. It localises to the nucleoid. Functionally, involved in control of chromosome replication initiation. Inhibits the cooperative binding of DnaA to the oriC region, thus negatively regulating initiation of chromosome replication. Inhibits the ability of DnaA-ATP to form a helix on DNA; does not disassemble preformed DnaA-DNA helices. Decreases the residence time of DnaA on the chromosome at its binding sites (oriC, replication forks and promoter-binding sites). Tethers DnaA to the replication machinery via the DNA polymerase beta sliding clamp subunit (dnaN). Associates with oriC and other DnaA targets on the chromosome in a DnaA-dependent manner. In Lactobacillus gasseri (strain ATCC 33323 / DSM 20243 / BCRC 14619 / CIP 102991 / JCM 1131 / KCTC 3163 / NCIMB 11718 / NCTC 13722 / AM63), this protein is Replication initiation control protein YabA.